The primary structure comprises 708 residues: WD repeat-containing and planar cell polarity effector protein fritz homolog (708 aa).

2 WD repeats span residues 303–342 (PLRS…TLLA) and 343–382 (QADL…IRAQ).

Belongs to the WD repeat fritz family. As to quaternary structure, interacts with sept2-a. Interacts with intu and fuz; fuz, intu and wdpcp probably form the core CPLANE (ciliogenesis and planar polarity effectors) complex.

It is found in the cell membrane. Its subcellular location is the cytoplasm. It localises to the cytoskeleton. The protein localises to the cilium axoneme. The protein resides in the cilium basal body. In terms of biological role, probable effector of the planar cell polarity signaling pathway which regulates the septin cytoskeleton in both ciliogenesis and collective cell movements including covergent extension during gastrulation. Controls cell shape but not polarization during convergent extension. Proposed to function as core component of the CPLANE (ciliogenesis and planar polarity effectors) complex involved in the recruitment of peripheral IFT-A proteins to basal bodies. The polypeptide is WD repeat-containing and planar cell polarity effector protein fritz homolog (wdpcp) (Xenopus laevis (African clawed frog)).